The primary structure comprises 467 residues: F-box/kelch-repeat protein SKIP11 (467 aa).

Positions 77 to 117 (LSGGEEQADAAIGDGSSSRQEQEQQSDFNDNGGDSSDSHSL) are disordered. Positions 92-111 (SSSRQEQEQQSDFNDNGGDS) are enriched in low complexity. One can recognise an F-box domain in the interval 116–163 (SLINEIGRDNSIDCLIRCSRSDYGSIASLNRNFRSLVKSGEIYRLRRQ). Kelch repeat units follow at residues 159–210 (RLRR…KESL), 215–259 (DLLV…SLGE), 261–307 (AIFA…FMDG), 308–356 (KFYV…DMSP), and 365–411 (AVVN…GLAF).

In terms of assembly, part of a SCF (ASK-cullin-F-box) protein ligase complex. Interacts with SKP1A/ASK1 and SPK1B/ASK2.

The protein resides in the nucleus. It participates in protein modification; protein ubiquitination. In terms of biological role, component of SCF(ASK-cullin-F-box) E3 ubiquitin ligase complexes, which may mediate the ubiquitination and subsequent proteasomal degradation of target proteins. The polypeptide is F-box/kelch-repeat protein SKIP11 (SKIP11) (Arabidopsis thaliana (Mouse-ear cress)).